The chain runs to 810 residues: Volume-regulated anion channel subunit LRRC8A (810 aa).

M1 carries the N-acetylmethionine modification. Residues 1–23 (MIPVTELRYFADTQPAYRILKPW) are Cytoplasmic-facing. A helical transmembrane segment spans residues 24–47 (WDVFTDYISIVMLMIAVFGGTLQV). Topologically, residues 48–123 (TQDKMICLPC…YENRLHWFAK (76 aa)) are extracellular. Disulfide bonds link C54–C310, C57–C65, and C113–C295. N-linked (GlcNAc...) asparagine glycans are attached at residues N66 and N83. Residues 124–142 (YFPYLVLLHTLIFLACSNF) form a helical membrane-spanning segment. Residues 143–264 (WFKFPRTSSK…EEGDIVYRLY (122 aa)) are Cytoplasmic-facing. At T200 the chain carries Phosphothreonine. S202 is subject to Phosphoserine. T215 bears the Phosphothreonine mark. S217 carries the phosphoserine modification. Residues 265–286 (MRQTIIKVIKFILIICYTVYYV) form a helical membrane-spanning segment. The Extracellular segment spans residues 287-316 (HNIKFDVDCTVDIESLTGYRTYRCAHPLAT). A helical transmembrane segment spans residues 317–341 (LFKILASFYISLVIFYGLICMYTLW). The Cytoplasmic segment spans residues 342-810 (WMLRRSLKKY…RLWRADKEQA (469 aa)). LRR repeat units lie at residues 399–422 (ENKL…RLTK), 423–445 (NAQD…VFDL), 447–468 (ELEV…IAQL), 469–492 (TGLK…AFLR), 493–515 (ENLR…IYSL), 518–542 (LEEL…GLRE), 543–565 (LKRL…VTDV), 567–589 (VHLQ…SLKK), 590–613 (MANL…IFSL), 615–637 (NLQE…SFQH), 639–661 (HRLT…IGNL), 662–684 (TNLE…LFYC), 686–707 (KLRY…IGLL), 708–730 (QNLQ…LFQC), 732–753 (KLRA…VGEL), 754–776 (TNLT…LGEC), and 778–801 (LLKR…VKER). The Di-leucine motif signature appears at 706–707 (LL).

Belongs to the LRRC8 family. Heterohexamer; oligomerizes with other LRRC8 proteins (LRRC8B, LRRC8C, LRRC8D and/or LRRC8E) to form a heterohexamer. Can form homohexamers in vitro, but these have lower conductance than heterohexamers. In vivo, the subunit composition may depend primarily on expression levels, and heterooligomeric channels containing various proportions of the different LRRC8 proteins may coexist. Interact with GRB2. Interacts with NOX4; this interaction prevents the ubiquitin-mediated degradation of LRRC8A. Post-translationally, N-glycosylated. As to expression, expressed in brain, kidney, ovary, lung, liver, heart, and fetal brain and liver. Found at high levels in bone marrow; lower levels are detected in peripheral blood cells. Expressed on T-cells as well as on B-lineage cells.

The protein localises to the cell membrane. Its subcellular location is the lysosome membrane. The enzyme catalyses chloride(in) = chloride(out). The catalysed reaction is iodide(out) = iodide(in). It carries out the reaction taurine(out) = taurine(in). It catalyses the reaction L-aspartate(out) = L-aspartate(in). The enzyme catalyses L-glutamate(out) = L-glutamate(in). The catalysed reaction is myo-inositol(out) = myo-inositol(in). It carries out the reaction 2',3'-cGAMP(out) = 2',3'-cGAMP(in). With respect to regulation, inhibited by (4-[(2-butyl-6,7-dichloro-2-cyclopentyl-2,3-dihydro-1-oxo-1H-inden-5-yl)oxy]butanoic acid), which plugs the channel like a cork in a bottle by binding in the extracellular selectivity filter and sterically occluding ion conduction. Lipids may block conduction in closed heterohexameric channels. Functionally, essential component of the volume-regulated anion channel (VRAC, also named VSOAC channel), an anion channel required to maintain a constant cell volume in response to extracellular or intracellular osmotic changes. The VRAC channel conducts iodide better than chloride and can also conduct organic osmolytes like taurine. Mediates efflux of amino acids, such as aspartate and glutamate, in response to osmotic stress. LRRC8A and LRRC8D are required for the uptake of the drug cisplatin. In complex with LRRC8C or LRRC8E, acts as a transporter of immunoreactive cyclic dinucleotide GMP-AMP (2'-3'-cGAMP), an immune messenger produced in response to DNA virus in the cytosol: mediates both import and export of 2'-3'-cGAMP, thereby promoting transfer of 2'-3'-cGAMP to bystander cells. In contrast, complexes containing LRRC8D inhibit transport of 2'-3'-cGAMP. Required for in vivo channel activity, together with at least one other family member (LRRC8B, LRRC8C, LRRC8D or LRRC8E); channel characteristics depend on the precise subunit composition. Can form functional channels by itself (in vitro). Involved in B-cell development: required for the pro-B cell to pre-B cell transition. Also required for T-cell development. Required for myoblast differentiation: VRAC activity promotes membrane hyperpolarization and regulates insulin-stimulated glucose metabolism and oxygen consumption. Also acts as a regulator of glucose-sensing in pancreatic beta cells: VRAC currents, generated in response to hypotonicity- or glucose-induced beta cell swelling, depolarize cells, thereby causing electrical excitation, leading to increase glucose sensitivity and insulin secretion. Also plays a role in lysosome homeostasis by forming functional lysosomal VRAC channels in response to low cytoplasmic ionic strength condition: lysosomal VRAC channels are necessary for the formation of large lysosome-derived vacuoles, which store and then expel excess water to maintain cytosolic water homeostasis. Acts as a key factor in NLRP3 inflammasome activation by modulating itaconate efflux and mitochondria function. The polypeptide is Volume-regulated anion channel subunit LRRC8A (Homo sapiens (Human)).